A 457-amino-acid polypeptide reads, in one-letter code: Adenylosuccinate synthetase isozyme 1 (457 aa).

A disordered region spans residues 1 to 25 (MSGTRASNDRPPSAGGVKRGRLQHE). Residues 42 to 48 (GDEGKGK) and 70 to 72 (GHT) contribute to the GTP site. Asp-43 functions as the Proton acceptor in the catalytic mechanism. The Mg(2+) site is built by Asp-43 and Gly-70. Asp-43 lines the substrate pocket. IMP-binding positions include 43–46 (DEGK), 68–71 (NAGH), Thr-163, Arg-177, Asn-256, Thr-271, and Arg-335. His-71 (proton donor) is an active-site residue. 331–337 (VTTGRKR) serves as a coordination point for substrate. Residues Arg-337, 363–365 (KLD), and 445–448 (GVGK) contribute to the GTP site.

It belongs to the adenylosuccinate synthetase family. In terms of assembly, homodimer. It depends on Mg(2+) as a cofactor. As to expression, predominantly expressed in the striated muscle tissues.

The protein resides in the cytoplasm. The enzyme catalyses IMP + L-aspartate + GTP = N(6)-(1,2-dicarboxyethyl)-AMP + GDP + phosphate + 2 H(+). It functions in the pathway purine metabolism; AMP biosynthesis via de novo pathway; AMP from IMP: step 1/2. Component of the purine nucleotide cycle (PNC), which interconverts IMP and AMP to regulate the nucleotide levels in various tissues, and which contributes to glycolysis and ammoniagenesis. Catalyzes the first committed step in the biosynthesis of AMP from IMP. The protein is Adenylosuccinate synthetase isozyme 1 of Sus scrofa (Pig).